The chain runs to 179 residues: Large ribosomal subunit protein uL5 (179 aa).

It belongs to the universal ribosomal protein uL5 family. Part of the 50S ribosomal subunit; part of the 5S rRNA/L5/L18/L25 subcomplex. Contacts the 5S rRNA and the P site tRNA. Forms a bridge to the 30S subunit in the 70S ribosome.

This is one of the proteins that bind and probably mediate the attachment of the 5S RNA into the large ribosomal subunit, where it forms part of the central protuberance. In the 70S ribosome it contacts protein S13 of the 30S subunit (bridge B1b), connecting the 2 subunits; this bridge is implicated in subunit movement. Contacts the P site tRNA; the 5S rRNA and some of its associated proteins might help stabilize positioning of ribosome-bound tRNAs. This Geotalea uraniireducens (strain Rf4) (Geobacter uraniireducens) protein is Large ribosomal subunit protein uL5.